A 752-amino-acid chain; its full sequence is Two pore channel protein 2 (752 aa).

Topologically, residues 1 to 84 (MAEPQAESEP…RRYYSNVCQR (84 aa)) are cytoplasmic. A helical transmembrane segment spans residues 85 to 105 (TLSFTIFLILFLAFIETPSSL). At 106–127 (TSTADVRYRAAPWEPPCGLTES) the chain is on the extracellular side. The chain crosses the membrane as a helical span at residues 128 to 148 (VEVLCLLVFAADLSVKGYLFG). Residues 149–155 (WAHFQKN) are Cytoplasmic-facing. The chain crosses the membrane as a helical span at residues 156-176 (LWLLGYLVVLVVSLVDWTVSL). Residues 177–183 (SLVCHEP) are Extracellular-facing. A helical transmembrane segment spans residues 184–204 (LRIRRLLRPFFLLQNSSMMKK). The interaction with phosphatidylinositol 3,5-bisphosphate stretch occupies residues 203-207 (KKTLK). At 205–218 (TLKCIRWSLPEMAS) the chain is on the cytoplasmic side. A helical membrane pass occupies residues 219 to 239 (VGLLLAIHLCLFTMFGMLLFA). Residues 240–254 (GGKQDDGQDRERLTY) lie on the Extracellular side of the membrane. The helical; Pore-forming intramembrane region spans 255-279 (FQNLPESLTSLLVLLTTANNPDVMI). The Extracellular segment spans residues 280-289 (PAYSKNRAYA). The chain crosses the membrane as a helical span at residues 290–310 (IFFIVFTVIGSLFLMNLLTAI). The Cytoplasmic portion of the chain corresponds to 311 to 436 (IYSQFRGYLM…FLFGHYYFDY (126 aa)). The helical transmembrane segment at 437-459 (LGNLIALANLVSICVFLVLDADV) threads the bilayer. The Extracellular portion of the chain corresponds to 460 to 465 (LPAERD). Residues 466–486 (DFILGILNCVFIVYYLLEMLL) traverse the membrane as a helical segment. The Cytoplasmic segment spans residues 487 to 502 (KVFALGLRGYLSYPSN). The chain crosses the membrane as a helical span at residues 503 to 523 (VFDGLLTVVLLVLEISTLAVY). Topologically, residues 524 to 554 (RLPHPGWRPEMVGLLSLWDMTRMLNMLIVFR) are extracellular. Residues 555–575 (FLRIIPSMKLMAVVASTVLGL) traverse the membrane as a helical segment. The Cytoplasmic segment spans residues 576-580 (VQNMR). A helical transmembrane segment spans residues 581-601 (AFGGILVVVYYVFAIIGINLF). At 602–635 (RGVIVALPGNSSLAPANGSAPCGSFEQLEYWANN) the chain is on the extracellular side. N-linked (GlcNAc...) asparagine glycosylation is found at N611 and N618. The helical; Pore-forming intramembrane region spans 636 to 658 (FDDFAAALVTLWNLMVVNNWQVF). The Extracellular segment spans residues 659 to 673 (LDAYRRYSGPWSKIY). Residues 674–694 (FVLWWLVSSVIWVNLFLALIL) form a helical membrane-spanning segment. Topologically, residues 695–752 (ENFLHKWDPRSHLQPLAGTPEATYQMTVELLFRDILEEPGEDELTERLSQHPHLWLCR) are cytoplasmic.

Belongs to the calcium channel alpha-1 subunit (TC 1.A.1.11) family. Two pore calcium channel subfamily. Homodimer. Interacts with LRRK2. Interacts with HAX1. Interacts with MTOR; the interaction is required for TPCN2 ATP sensitivity. Found in a complex with LSM12, TPCN1 and TPCN2. Interacts with LSM12. N-glycosylated. Widely expressed. Expressed at high level in liver and kidney.

It localises to the late endosome membrane. It is found in the lysosome membrane. Its subcellular location is the melanosome membrane. The catalysed reaction is Na(+)(in) = Na(+)(out). It catalyses the reaction Ca(2+)(in) = Ca(2+)(out). Regulated by Mg(2+) ions, cytosolic Mg(2+) selectively inhibits outward current while lysosomal Mg(2+) modestly inhibits both the outward and inward currents. In the absence of Mg(2+), NAADP readily activates TPCN2, with properties similar to PI(3,5)P2. Na(+) current is inhibited by ATP in a MTORC-dependent manner. ATP sensitivity is independent of PI(3,5)P2. Both current elicited by PI(3,5)P2 as well as NAADP are inhibited by tetrandrine. Intracellular channel initially characterized as a non-selective Ca(2+)-permeable channel activated by NAADP (nicotinic acid adenine dinucleotide phosphate), it is also a highly-selective Na(+) channel activated directly by PI(3,5)P2 (phosphatidylinositol 3,5-bisphosphate). Localizes to the lysosomal and late endosome membranes where it regulates organellar membrane excitability, membrane trafficking, and pH homeostasis. Is associated with a plethora of physiological processes, including mTOR-dependent nutrient sensing, skin pigmentation and autophagy. Ion selectivity is not fixed but rather agonist-dependent and under defined ionic conditions, can be readily activated by both NAADP and PI(3,5)P2. As calcium channel, it increases the pH in the lysosomal lumen, as sodium channel, it promotes lysosomal exocytosis. Plays a crucial role in endolysosomal trafficking in the endolysosomal degradation pathway and is potentially involved in the homeostatic control of many macromolecules and cell metabolites. Also expressed in melanosomes of pigmented cells where mediates a Ca(2+) channel and/or PI(3,5)P2-activated melanosomal Na(+) channel to acidify pH and inhibit tyrosinase activity required for melanogenesis and pigmentation. Unlike the voltage-dependent TPCN1, TPCN2 is voltage independent and can be activated solely by PI(3,5)P2 binding. In contrast, PI(4,5)P2, PI(3,4)P2, PI(3)P and PI(5)P have no obvious effect on channel activation. Functionally, (Microbial infection) During Ebola virus (EBOV) infection, controls the movement of endosomes containing virus particles and is required by EBOV to escape from the endosomal network into the cell cytoplasm. Its function is as follows. (Microbial infection) Required for cell entry of coronaviruses SARS-CoV and SARS-CoV-2, as well as human coronavirus EMC (HCoV-EMC), by endocytosis. The protein is Two pore channel protein 2 of Homo sapiens (Human).